Here is a 264-residue protein sequence, read N- to C-terminus: S-adenosylmethionine decarboxylase proenzyme (264 aa).

Residue serine 112 is the Schiff-base intermediate with substrate; via pyruvic acid of the active site. A Pyruvic acid (Ser); by autocatalysis modification is found at serine 112. The active-site Proton acceptor; for processing activity is the histidine 117. The active-site Proton donor; for catalytic activity is the cysteine 140.

The protein belongs to the prokaryotic AdoMetDC family. Type 2 subfamily. As to quaternary structure, heterooctamer of four alpha and four beta chains arranged as a tetramer of alpha/beta heterodimers. Requires pyruvate as cofactor. In terms of processing, is synthesized initially as an inactive proenzyme. Formation of the active enzyme involves a self-maturation process in which the active site pyruvoyl group is generated from an internal serine residue via an autocatalytic post-translational modification. Two non-identical subunits are generated from the proenzyme in this reaction, and the pyruvate is formed at the N-terminus of the alpha chain, which is derived from the carboxyl end of the proenzyme. The post-translation cleavage follows an unusual pathway, termed non-hydrolytic serinolysis, in which the side chain hydroxyl group of the serine supplies its oxygen atom to form the C-terminus of the beta chain, while the remainder of the serine residue undergoes an oxidative deamination to produce ammonia and the pyruvoyl group blocking the N-terminus of the alpha chain.

It carries out the reaction S-adenosyl-L-methionine + H(+) = S-adenosyl 3-(methylsulfanyl)propylamine + CO2. It participates in amine and polyamine biosynthesis; S-adenosylmethioninamine biosynthesis; S-adenosylmethioninamine from S-adenosyl-L-methionine: step 1/1. Catalyzes the decarboxylation of S-adenosylmethionine to S-adenosylmethioninamine (dcAdoMet), the propylamine donor required for the synthesis of the polyamines spermine and spermidine from the diamine putrescine. The sequence is that of S-adenosylmethionine decarboxylase proenzyme from Salmonella typhi.